The following is a 402-amino-acid chain: Speedy protein E6 (402 aa).

Residues 1–89 (MDRTETRFRK…EEPEKELAPE (89 aa)) form a disordered region. A compositionally biased stretch (polar residues) spans 16–39 (GKITTSRQPHPQNEQSPQRSTSGY). Residues 76-89 (DESEEEPEKELAPE) are compositionally biased toward acidic residues.

It belongs to the Speedy/Ringo family.

In Homo sapiens (Human), this protein is Speedy protein E6 (SPDYE6).